The sequence spans 579 residues: Solute carrier family 15 member 5 (579 aa).

The next 11 membrane-spanning stretches (helical) occupy residues 77 to 97, 110 to 130, 154 to 174, 191 to 211, 221 to 241, 304 to 324, 343 to 363, 386 to 406, 422 to 442, 472 to 492, and 509 to 529; these read CQAAILNLCFIGTSILTPVFV, LVYICLFLHFLGTALLSVVAF, LFYVALLTICLGIGGVRAIVC, SFFNWFYWLMNLNATIVFLGI, ALVLLIPFMSMLMAVITLHMI, TFFLTLLPLFIFQLLYRMCIM, GFLLPIAVMNAISSLPLLILA, CIIAGNLFAALSVMIAGFFEI, VLTVSSMPCFYLILQYVLLGV, TLFNGFGCFTGALLVKLVYLI, and SFFFFLASLTLLNVLGFCSVS.

It belongs to the major facilitator superfamily. Proton-dependent oligopeptide transporter (POT/PTR) (TC 2.A.17) family.

It localises to the membrane. Functionally, proton oligopeptide cotransporter. This Homo sapiens (Human) protein is Solute carrier family 15 member 5 (SLC15A5).